The chain runs to 609 residues: Mitochondrial nucleoid-associated protein 1 (609 aa).

The Extracellular portion of the chain corresponds to methionine 1 to phenylalanine 554. Disordered regions lie at residues glutamine 133–arginine 163 and serine 406–histidine 425. Residues threonine 146–glutamate 161 are compositionally biased toward basic and acidic residues. A helical transmembrane segment spans residues glycine 555 to tryptophan 571. Residues serine 572–aspartate 609 lie on the Cytoplasmic side of the membrane.

It localises to the mitochondrion inner membrane. It is found in the mitochondrion matrix. Its subcellular location is the mitochondrion nucleoid. Functionally, critical regulator of mitochondrial DNA (mtDNA) abundance. Binds dsDNA throughout the mitochondrial genome without sequence specificity and controls mtDNA copy number by promoting its replication. Also plays important roles in mitochondrial metabolism and cell proliferation. The protein is Mitochondrial nucleoid-associated protein 1 of Pongo abelii (Sumatran orangutan).